The chain runs to 140 residues: Large ribosomal subunit protein uL11 (140 aa).

The protein belongs to the universal ribosomal protein uL11 family. Part of the ribosomal stalk of the 50S ribosomal subunit. Interacts with L10 and the large rRNA to form the base of the stalk. L10 forms an elongated spine to which L12 dimers bind in a sequential fashion forming a multimeric L10(L12)X complex. One or more lysine residues are methylated.

Forms part of the ribosomal stalk which helps the ribosome interact with GTP-bound translation factors. This chain is Large ribosomal subunit protein uL11, found in Campylobacter hominis (strain ATCC BAA-381 / DSM 21671 / CCUG 45161 / LMG 19568 / NCTC 13146 / CH001A).